The following is a 127-amino-acid chain: Large ribosomal subunit protein uL24B (127 aa).

The protein belongs to the universal ribosomal protein uL24 family. Component of the large ribosomal subunit (LSU). Mature yeast ribosomes consist of a small (40S) and a large (60S) subunit. The 40S small subunit contains 1 molecule of ribosomal RNA (18S rRNA) and 33 different proteins (encoded by 57 genes). The large 60S subunit contains 3 rRNA molecules (25S, 5.8S and 5S rRNA) and 46 different proteins (encoded by 81 genes).

Its subcellular location is the cytoplasm. Its function is as follows. Component of the ribosome, a large ribonucleoprotein complex responsible for the synthesis of proteins in the cell. The small ribosomal subunit (SSU) binds messenger RNAs (mRNAs) and translates the encoded message by selecting cognate aminoacyl-transfer RNA (tRNA) molecules. The large subunit (LSU) contains the ribosomal catalytic site termed the peptidyl transferase center (PTC), which catalyzes the formation of peptide bonds, thereby polymerizing the amino acids delivered by tRNAs into a polypeptide chain. The nascent polypeptides leave the ribosome through a tunnel in the LSU and interact with protein factors that function in enzymatic processing, targeting, and the membrane insertion of nascent chains at the exit of the ribosomal tunnel. In Saccharomyces cerevisiae (strain ATCC 204508 / S288c) (Baker's yeast), this protein is Large ribosomal subunit protein uL24B.